We begin with the raw amino-acid sequence, 327 residues long: Glycerol-3-phosphate dehydrogenase [NAD(P)+] (327 aa).

Residues Ser-10, Phe-11, Arg-31, and Lys-108 each coordinate NADPH. Residues Lys-108, Gly-136, and Ser-138 each contribute to the sn-glycerol 3-phosphate site. Ala-140 contacts NADPH. Residues Lys-191, Asp-246, Ser-256, Arg-257, and Asn-258 each coordinate sn-glycerol 3-phosphate. Catalysis depends on Lys-191, which acts as the Proton acceptor. Arg-257 lines the NADPH pocket. The NADPH site is built by Leu-281 and Glu-283.

This sequence belongs to the NAD-dependent glycerol-3-phosphate dehydrogenase family.

Its subcellular location is the cytoplasm. The catalysed reaction is sn-glycerol 3-phosphate + NAD(+) = dihydroxyacetone phosphate + NADH + H(+). It catalyses the reaction sn-glycerol 3-phosphate + NADP(+) = dihydroxyacetone phosphate + NADPH + H(+). Its pathway is membrane lipid metabolism; glycerophospholipid metabolism. Its function is as follows. Catalyzes the reduction of the glycolytic intermediate dihydroxyacetone phosphate (DHAP) to sn-glycerol 3-phosphate (G3P), the key precursor for phospholipid synthesis. This is Glycerol-3-phosphate dehydrogenase [NAD(P)+] from Ehrlichia ruminantium (strain Gardel).